The chain runs to 294 residues: Elongation factor Ts (294 aa).

The tract at residues 79–82 is involved in Mg(2+) ion dislocation from EF-Tu; sequence TDFV.

It belongs to the EF-Ts family.

The protein resides in the cytoplasm. In terms of biological role, associates with the EF-Tu.GDP complex and induces the exchange of GDP to GTP. It remains bound to the aminoacyl-tRNA.EF-Tu.GTP complex up to the GTP hydrolysis stage on the ribosome. The polypeptide is Elongation factor Ts (Oceanobacillus iheyensis (strain DSM 14371 / CIP 107618 / JCM 11309 / KCTC 3954 / HTE831)).